The primary structure comprises 166 residues: Cyclin-dependent kinase 4 inhibitor D (166 aa).

The residue at position 1 (methionine 1) is an N-acetylmethionine. ANK repeat units lie at residues 41–69 (FGKT…SPNV), 73–102 (SGTS…DVNV), 106–135 (TGAL…LHRR), and 138–166 (RGLT…VAPL).

This sequence belongs to the CDKN2 cyclin-dependent kinase inhibitor family. As to quaternary structure, interacts with CDK6.

It localises to the nucleus. Its subcellular location is the cytoplasm. In terms of biological role, interacts strongly with CDK4 and CDK6 and inhibits them. This is Cyclin-dependent kinase 4 inhibitor D (CDKN2D) from Homo sapiens (Human).